A 172-amino-acid chain; its full sequence is Dual-action ribosomal maturation protein DarP (172 aa).

Belongs to the DarP family.

Its subcellular location is the cytoplasm. Member of a network of 50S ribosomal subunit biogenesis factors which assembles along the 30S-50S interface, preventing incorrect 23S rRNA structures from forming. Promotes peptidyl transferase center (PTC) maturation. In Ectopseudomonas mendocina (strain ymp) (Pseudomonas mendocina), this protein is Dual-action ribosomal maturation protein DarP.